Here is a 244-residue protein sequence, read N- to C-terminus: Venom nerve growth factor 2 (244 aa).

Positions 1–18 are cleaved as a signal peptide; it reads MSMLCYTLIIAFLIGTWA. A propeptide spanning residues 19–125 is cleaved from the precursor; sequence APKSEDNVPL…TLNRNIRAKR (107 aa). Residues 47–66 are compositionally biased toward basic and acidic residues; sequence GLKTSRNTDQRHPAPKKAED. The tract at residues 47 to 67 is disordered; that stretch reads GLKTSRNTDQRHPAPKKAEDQ. Intrachain disulfides connect C139-C205, C181-C233, and C193-C235.

This sequence belongs to the NGF-beta family. In terms of assembly, homodimer; non-covalently linked. In terms of tissue distribution, expressed by the venom gland.

The protein localises to the secreted. In terms of biological role, nerve growth factor is important for the development and maintenance of the sympathetic and sensory nervous systems. It stimulates division and differentiation of sympathetic and embryonic sensory neurons as well as basal forebrain cholinergic neurons in the brain. Its relevance in the snake venom is not clear. However, it has been shown to inhibit metalloproteinase-dependent proteolysis of platelet glycoprotein Ib alpha, suggesting a metalloproteinase inhibition to prevent metalloprotease autodigestion and/or protection against prey proteases. Binds a lipid between the two protein chains in the homodimer. The lipid-bound form promotes histamine relase from mouse mast cells, contrary to the lipid-free form. This Tropidechis carinatus (Australian rough-scaled snake) protein is Venom nerve growth factor 2.